Consider the following 115-residue polypeptide: MKGTLLLLALLVTGELGFQTTEACIPFYEAFGAVVLGNKQVLDVVLSKFNATDKEREAFEKIQECYNDGGLKSKLLDTRVVYEVTVNSPCKEYYTKDTILKVEDLLFQIQRHIMG.

An N-terminal signal peptide occupies residues 1–23 (MKGTLLLLALLVTGELGFQTTEA).

Belongs to the secretoglobin family.

The protein resides in the secreted. This Mesocricetus auratus (Golden hamster) protein is Androgen-binding protein homolog.